The chain runs to 263 residues: Hydroxyacylglutathione hydrolase (263 aa).

H55, H57, D59, H60, H117, D134, and H172 together coordinate Zn(2+).

The protein belongs to the metallo-beta-lactamase superfamily. Glyoxalase II family. As to quaternary structure, monomer. Requires Zn(2+) as cofactor.

The enzyme catalyses an S-(2-hydroxyacyl)glutathione + H2O = a 2-hydroxy carboxylate + glutathione + H(+). The protein operates within secondary metabolite metabolism; methylglyoxal degradation; (R)-lactate from methylglyoxal: step 2/2. Functionally, thiolesterase that catalyzes the hydrolysis of S-D-lactoyl-glutathione to form glutathione and D-lactic acid. The polypeptide is Hydroxyacylglutathione hydrolase (Shewanella baltica (strain OS155 / ATCC BAA-1091)).